Consider the following 167-residue polypeptide: Phosphopantetheine adenylyltransferase (167 aa).

A substrate-binding site is contributed by Ser11. ATP contacts are provided by residues 11 to 12 (SF) and His19. Lys43, Thr76, and Arg90 together coordinate substrate. Residues 91 to 93 (GIR), Glu101, and 126 to 132 (YDALSST) each bind ATP.

This sequence belongs to the bacterial CoaD family. As to quaternary structure, homohexamer. The cofactor is Mg(2+).

The protein resides in the cytoplasm. It catalyses the reaction (R)-4'-phosphopantetheine + ATP + H(+) = 3'-dephospho-CoA + diphosphate. The protein operates within cofactor biosynthesis; coenzyme A biosynthesis; CoA from (R)-pantothenate: step 4/5. Functionally, reversibly transfers an adenylyl group from ATP to 4'-phosphopantetheine, yielding dephospho-CoA (dPCoA) and pyrophosphate. This Lacticaseibacillus casei (strain BL23) (Lactobacillus casei) protein is Phosphopantetheine adenylyltransferase.